The primary structure comprises 33 residues: Ranatuerin-1T (33 aa).

Cys-27 and Cys-33 are oxidised to a cystine.

As to expression, expressed by the skin glands.

It is found in the secreted. Antibacterial activity against Gram-positive bacterium S.aureus and Gram-negative bacterium E.coli. No activity against C.albicans. This chain is Ranatuerin-1T, found in Rana temporaria (European common frog).